A 252-amino-acid polypeptide reads, in one-letter code: Metalloprotease LoiP (252 aa).

The N-terminal stretch at 1 to 18 is a signal peptide; sequence MKIRALLVAMSVATVLTG. Cysteine 19 carries the N-palmitoyl cysteine lipid modification. Cysteine 19 is lipidated: S-diacylglycerol cysteine. An intrachain disulfide couples cysteine 53 to cysteine 108. Histidine 130 provides a ligand contact to Zn(2+). Glutamate 131 is an active-site residue. Residues histidine 134 and glutamate 189 each coordinate Zn(2+). The disordered stretch occupies residues 224–252; the sequence is RQSSMFDDHPASAERAQHIRDRMSADGIK.

It belongs to the peptidase M48B family. As to quaternary structure, interacts with Era and BepA. Zn(2+) is required as a cofactor. In terms of processing, the intramolecular disulfide bond improves the stability and the activity of LoiP. It forms even in the absence of the oxido-reductase DsbA.

It localises to the cell outer membrane. In terms of biological role, metalloprotease that cleaves substrates preferentially between Phe-Phe residues. Plays a role in response to some stress conditions. Seems to regulate the expression of speB. This chain is Metalloprotease LoiP (loiP), found in Escherichia coli (strain K12).